Consider the following 121-residue polypeptide: C-type natriuretic peptide 4 (121 aa).

An N-terminal signal peptide occupies residues 1–22 (MNLSYLVACGLLVTFLSDKMDA). Positions 23 to 96 (QPLTPAQQKS…SRRHKSGSKK (74 aa)) are excised as a propeptide. Positions 80–109 (LLNDQPASRRHKSGSKKGGSTSRSGCFGHK) are disordered. The cysteines at positions 105 and 121 are disulfide-linked.

The protein belongs to the natriuretic peptide family. As to expression, brain, spinal cord, spleen, heart and fin, and to a lower extent in gill and ovary.

The protein localises to the secreted. In terms of biological role, exhibits natriuretic and vasodepressant activity. Has cGMP-stimulating activity. May help to regulate body fluid homeostasis in a variety of aquatic environments. The protein is C-type natriuretic peptide 4 of Oryzias latipes (Japanese rice fish).